The chain runs to 255 residues: Ribosomal RNA small subunit methyltransferase A (255 aa).

S-adenosyl-L-methionine is bound by residues N12, L14, G39, E60, D84, and N106.

This sequence belongs to the class I-like SAM-binding methyltransferase superfamily. rRNA adenine N(6)-methyltransferase family. RsmA subfamily.

It is found in the cytoplasm. It carries out the reaction adenosine(1518)/adenosine(1519) in 16S rRNA + 4 S-adenosyl-L-methionine = N(6)-dimethyladenosine(1518)/N(6)-dimethyladenosine(1519) in 16S rRNA + 4 S-adenosyl-L-homocysteine + 4 H(+). Its function is as follows. Specifically dimethylates two adjacent adenosines (A1518 and A1519) in the loop of a conserved hairpin near the 3'-end of 16S rRNA in the 30S particle. May play a critical role in biogenesis of 30S subunits. In Janthinobacterium sp. (strain Marseille) (Minibacterium massiliensis), this protein is Ribosomal RNA small subunit methyltransferase A.